A 667-amino-acid polypeptide reads, in one-letter code: DNA ligase (667 aa).

NAD(+) is bound by residues 32-36 (DSEYD), 81-82 (SL), and E110. Residue K112 is the N6-AMP-lysine intermediate of the active site. 4 residues coordinate NAD(+): R133, E167, K283, and K307. 4 residues coordinate Zn(2+): C401, C404, C419, and C424. The 82-residue stretch at 586 to 667 (EGHPEFSGKT…FVDKQNELNS (82 aa)) folds into the BRCT domain.

It belongs to the NAD-dependent DNA ligase family. LigA subfamily. Mg(2+) is required as a cofactor. Mn(2+) serves as cofactor.

It catalyses the reaction NAD(+) + (deoxyribonucleotide)n-3'-hydroxyl + 5'-phospho-(deoxyribonucleotide)m = (deoxyribonucleotide)n+m + AMP + beta-nicotinamide D-nucleotide.. In terms of biological role, DNA ligase that catalyzes the formation of phosphodiester linkages between 5'-phosphoryl and 3'-hydroxyl groups in double-stranded DNA using NAD as a coenzyme and as the energy source for the reaction. It is essential for DNA replication and repair of damaged DNA. This chain is DNA ligase, found in Staphylococcus aureus (strain COL).